Consider the following 314-residue polypeptide: tRNA uridine(34) hydroxylase (314 aa).

The Rhodanese domain maps to 135–229 (ADPETLVIDT…YLEQIPAEES (95 aa)). Catalysis depends on cysteine 189, which acts as the Cysteine persulfide intermediate.

This sequence belongs to the TrhO family.

It carries out the reaction uridine(34) in tRNA + AH2 + O2 = 5-hydroxyuridine(34) in tRNA + A + H2O. Catalyzes oxygen-dependent 5-hydroxyuridine (ho5U) modification at position 34 in tRNAs. In Sinorhizobium fredii (strain NBRC 101917 / NGR234), this protein is tRNA uridine(34) hydroxylase.